A 431-amino-acid polypeptide reads, in one-letter code: Venom metalloproteinase 1 (431 aa).

Residues methionine 1–cysteine 22 form the signal peptide. N-linked (GlcNAc...) asparagine glycosylation is found at asparagine 64, asparagine 113, asparagine 148, and asparagine 187. The 201-residue stretch at aspartate 228 to tyrosine 428 folds into the Peptidase M12B domain. 2 disulfides stabilise this stretch: cysteine 340–cysteine 423 and cysteine 379–cysteine 407. Zn(2+) is bound at residue histidine 363. The active site involves glutamate 364. Zn(2+)-binding residues include histidine 367 and histidine 373. The N-linked (GlcNAc...) asparagine glycan is linked to asparagine 414.

The protein in the C-terminal section; belongs to the venom metalloproteinase (M12B) family. Monomer. The cofactor is Zn(2+). Expressed by the venom gland.

It is found in the secreted. The gelatinase activity is inhibited by EDTA. Functionally, the recombinant protein has gelatinase activity. In vivo, injection of this recombinant into fifth instar L.oleracea (host) larvae results in partial insect mortality associated with the molt to sixth instar, with surviving insects showing retarded development and growth. The protein is Venom metalloproteinase 1 of Eulophus pennicornis (Parasitoid wasp).